Here is a 158-residue protein sequence, read N- to C-terminus: UPF0098 protein YbhB (158 aa).

The protein belongs to the UPF0098 family. Homodimer.

It localises to the cytoplasm. This is UPF0098 protein YbhB (ybhB) from Escherichia coli (strain K12).